A 282-amino-acid chain; its full sequence is Snake venom serine protease NaSP (282 aa).

The signal sequence occupies residues 1–18; that stretch reads MVLIRVLASLLILQLSYS. Positions 19–56 are excised as a propeptide; the sequence is KSLDDGAKESAYDDEIQQSSWGNSTVNTTLTETVVIQL. N41 and N45 each carry an N-linked (GlcNAc...) asparagine glycan. Positions 57-280 constitute a Peptidase S1 domain; sequence IMGGSECYKS…YIDWIRGIIA (224 aa). Disulfide bonds link C63-C195, C82-C98, C174-C241, C206-C220, and C231-C256. The active-site Charge relay system is the H97. A glycan (N-linked (GlcNAc...) asparagine) is linked at N135. Residue D142 is the Charge relay system of the active site. N149 and N153 each carry an N-linked (GlcNAc...) asparagine glycan. The active-site Charge relay system is the S235.

The protein belongs to the peptidase S1 family. Snake venom subfamily. As to quaternary structure, monomer. In terms of tissue distribution, expressed by the venom gland.

Its subcellular location is the secreted. Snake venom serine protease that may act in the hemostasis system of the prey. The polypeptide is Snake venom serine protease NaSP (Naja atra (Chinese cobra)).